A 380-amino-acid chain; its full sequence is Cytochrome b (380 aa).

4 helical membrane passes run 34–54 (FGSL…LLAM), 78–99 (WLIR…YLHI), 114–134 (WNTG…GYVL), and 179–199 (FFAL…IHLT). Heme b contacts are provided by histidine 84 and histidine 98. 2 residues coordinate heme b: histidine 183 and histidine 197. Histidine 202 serves as a coordination point for a ubiquinone. 4 helical membrane passes run 227–247 (SKDI…ALLS), 289–309 (LGGV…PFLH), 321–341 (LSQA…WIGS), and 348–368 (FIII…ILLP).

This sequence belongs to the cytochrome b family. As to quaternary structure, the cytochrome bc1 complex contains 11 subunits: 3 respiratory subunits (MT-CYB, CYC1 and UQCRFS1), 2 core proteins (UQCRC1 and UQCRC2) and 6 low-molecular weight proteins (UQCRH/QCR6, UQCRB/QCR7, UQCRQ/QCR8, UQCR10/QCR9, UQCR11/QCR10 and a cleavage product of UQCRFS1). This cytochrome bc1 complex then forms a dimer. The cofactor is heme b.

It is found in the mitochondrion inner membrane. Functionally, component of the ubiquinol-cytochrome c reductase complex (complex III or cytochrome b-c1 complex) that is part of the mitochondrial respiratory chain. The b-c1 complex mediates electron transfer from ubiquinol to cytochrome c. Contributes to the generation of a proton gradient across the mitochondrial membrane that is then used for ATP synthesis. In Phalcoboenus australis (Striated caracara), this protein is Cytochrome b (MT-CYB).